The sequence spans 1399 residues: MNQEIMNLFNPTTPAQVFDQIRISIASPEKILSWSYGEIKKPETINYRTFKPERDGLFCARIFGPIKDYECLCGKYKRMKYKGIICEKCSVEVTLSRVRRERMGHIELAAPVAHIWFLKSLPSRIGLLLDMTLKDLERILYFEYYVVLEPGLTALKDRQLLSEDEYLKAQDEYGQDSFTAMIGAEAIRELLRGLELEKLEQTLRAEMQETDSDIKHKKLAKRLKIVEAFRHSGNKPEWMIMTVVPVIPPDLRPLVPLDGGRFATSDLNDLYRRVINRNNRLKRLMELRAPDIIIRNEKRMLQEAVDALFDNGRRGRVITGANKRPLKSLADMLKGKQGRFRQNLLGKRVDYSGRSVIVVGPELRLHQCGLPKKMALELFKPFIYSRLDAKGLSTTVKQAKKLVEKERPEVWDILDEVIREHPVLLNRAPTLHRLGIQAFEPVLIEGKAIQLHPLVCSAFNADFDGDQMAVHVPLSLEAQLEARVLMMSTNNILHPANGQPIIVPSQDIVLGLYYVSIMREGMPGQGMTFGNMAELEHALHAKAIHLHSKIKYRWEGMNEEGKIAKRWIETTAGRVMLGNLLPKHPRVTFEVINKLMTKREISGVIDQVYRHCGQKETVIFCDRIMALGFYNAFKAGISFGKDDMVVPAGKWKIVDTTRTLAKDFEQQYNDGLITHGEKYNKVVDAWSKASEEIAKEMMKEISVTKKTATGADADINSIYMMSHSGARGSPAQMRQLAGMRGLMAKPSGEIIETPIISNFKEGLSVLEYFNSTHGARKGLADTALKTANSGYLTRRLVDVAQDCIITQDDCGTHLGIKMRAIVDAGTLVASLGSRILGRVPCDDVRDPATNAVLVKAGTLMEESHIDAIQQAGVQEVKIRSALTCELVNGICKMCYGRDLARGTPVNHGEAVGVIAAQSIGEPGTQLTMRTFHIGGAAQLNEQSFVESNFEGKVVIRNKAIARNSEGHLIAMVRNMVVTIVDPDGTERATHRIQYGSRMHVDDGDMIKRGQRIAEWDPYTRPILTEAEGTIGFEDLTEGLSISETLDESTGIAKRVVIDWRGTRGGADLRPAIVIKGKDGKVLKLARGGDARYMLSVDAILSVDIGATVKPGDILARISTESAKTRDITGGLPRVAELFEARKPKDAAIIAEIAGTIRFGRDYKNKRRISIEPVDKTEEAREYLIPKGKHIHLQDGDIVEKGDFIVEGNPAPHDILAIKGIEELAAYLVNEIQEVYRLQGVLINDKHIEVIVRQMLQKIEVTDQGDTDMIAGEQVDKIEFDALNAKAQEEGKKPASGNPVLLGITKASLQTRSFFSAASFQETTRVLTEAAVNGKIDPLEGLKENVIVGRLIPAGTGASMARIREVALKRDKLILDEREKQAAIVPSQPEPQPLALPPAE.

C71, C73, C86, and C89 together coordinate Zn(2+). Mg(2+)-binding residues include D462, D464, and D466. Zn(2+) is bound by residues C810, C884, C891, and C894. Positions K1379–E1399 are disordered. The segment covering Q1387–E1399 has biased composition (pro residues).

Belongs to the RNA polymerase beta' chain family. As to quaternary structure, the RNAP catalytic core consists of 2 alpha, 1 beta, 1 beta' and 1 omega subunit. When a sigma factor is associated with the core the holoenzyme is formed, which can initiate transcription. It depends on Mg(2+) as a cofactor. Requires Zn(2+) as cofactor.

It carries out the reaction RNA(n) + a ribonucleoside 5'-triphosphate = RNA(n+1) + diphosphate. Its function is as follows. DNA-dependent RNA polymerase catalyzes the transcription of DNA into RNA using the four ribonucleoside triphosphates as substrates. The polypeptide is DNA-directed RNA polymerase subunit beta' (Bradyrhizobium sp. (strain ORS 278)).